The sequence spans 279 residues: Large ribosomal subunit protein uL5c (279 aa).

Disordered regions lie at residues 1 to 23 and 40 to 63; these read MAAT…TASS and LRVA…SPSG. The N-terminal 43 residues, 1–43, are a transit peptide targeting the chloroplast; sequence MAATAVTLPSSPAPFPVTTTASSSRNVRLLLRSPPPRRALRVA. Residues 41-50 show a composition bias toward low complexity; sequence RVAASAAADA. Over residues 51 to 60 the composition is skewed to pro residues; it reads PPKPAPPPTS.

The protein belongs to the universal ribosomal protein uL5 family. Part of the 50S ribosomal subunit; contacts the 5S rRNA.

The protein resides in the plastid. Its subcellular location is the chloroplast. Binds 5S rRNA, forms part of the central protuberance of the 50S subunit. The sequence is that of Large ribosomal subunit protein uL5c (RPL5) from Oryza sativa subsp. japonica (Rice).